The sequence spans 66 residues: Large ribosomal subunit protein bL35 (66 aa).

Over residues 1 to 28 the composition is skewed to basic residues; the sequence is MPKMKTHRGSAKRFKRTGSGKLKRRHGF. The disordered stretch occupies residues 1–50; it reads MPKMKTHRGSAKRFKRTGSGKLKRRHGFTSHMFANKSQKQKRKLRKSAMV.

The protein belongs to the bacterial ribosomal protein bL35 family.

The chain is Large ribosomal subunit protein bL35 from Listeria monocytogenes serotype 4a (strain HCC23).